The sequence spans 440 residues: Phosphatidylcholine-sterol acyltransferase (440 aa).

The first 24 residues, Met1–Pro24, serve as a signal peptide directing secretion. Residue Asn44 is glycosylated (N-linked (GlcNAc...) asparagine). An intrachain disulfide couples Cys74 to Cys98. Residue Asn108 is glycosylated (N-linked (GlcNAc...) asparagine). Ser205 functions as the Nucleophile in the catalytic mechanism. Asn296 carries N-linked (GlcNAc...) asparagine glycosylation. A disulfide bond links Cys337 and Cys380. Catalysis depends on charge relay system residues Asp369 and His401. The N-linked (GlcNAc...) asparagine glycan is linked to Asn408.

The protein belongs to the AB hydrolase superfamily. Lipase family. As to expression, most abundant in liver and cerebellum.

The protein resides in the secreted. It catalyses the reaction a sterol + a 1,2-diacyl-sn-glycero-3-phosphocholine = a sterol ester + a 1-acyl-sn-glycero-3-phosphocholine. APOA1 is the most potent activator in plasma. Also activated by APOE, APOC1 and APOA4. Central enzyme in the extracellular metabolism of plasma lipoproteins. Synthesized mainly in the liver and secreted into plasma where it converts cholesterol and phosphatidylcholines (lecithins) to cholesteryl esters and lysophosphatidylcholines on the surface of high and low density lipoproteins (HDLs and LDLs). The cholesterol ester is then transported back to the liver. Has a preference for plasma 16:0-18:2 or 18:O-18:2 phosphatidylcholines. Also produced in the brain by primary astrocytes, and esterifies free cholesterol on nascent APOE-containing lipoproteins secreted from glia and influences cerebral spinal fluid (CSF) APOE- and APOA1 levels. Together with APOE and the cholesterol transporter ABCA1, plays a key role in the maturation of glial-derived, nascent lipoproteins. Required for remodeling high-density lipoprotein particles into their spherical forms. The sequence is that of Phosphatidylcholine-sterol acyltransferase (LCAT) from Papio anubis (Olive baboon).